The following is an 876-amino-acid chain: Monofunctional isopimaradiene synthase, chloroplastic (876 aa).

A chloroplast-targeting transit peptide spans 1 to 64 (MAMPSYSSLS…YLRLGSRKII (64 aa)). Residues Asp628, Asp632, Asn772, Thr776, and Glu780 each contribute to the Mg(2+) site. A DDXXD motif motif is present at residues 628–632 (DDLYD).

Belongs to the terpene synthase family. Tpsd subfamily. Mg(2+) serves as cofactor.

The protein resides in the plastid. The protein localises to the chloroplast. The catalysed reaction is (+)-copalyl diphosphate = isopimara-7,15-diene + diphosphate. Its pathway is terpene metabolism; oleoresin biosynthesis. In terms of biological role, involved in defensive oleoresin formation in conifers in response to insect attack or other injury. Involved in diterpene (C20) olefins biosynthesis. Monofunctional enzyme lacking the DXDD motif in the class II active site relevant for the cyclization of geranylgeranyl diphosphate (GGPP). Requires (+)-copalyl diphosphate ((+)-CPP) as substrate, but no activity with GGPP or ent-CPP. Isopimaradiene is the major products of the enzyme followed by sandaracopimaradiene. This Pinus contorta (Shore pine) protein is Monofunctional isopimaradiene synthase, chloroplastic.